A 242-amino-acid polypeptide reads, in one-letter code: Phosphomannomutase 2 (242 aa).

Asp8 functions as the Nucleophile in the catalytic mechanism. Residues Asp8 and Asp10 each contribute to the Mg(2+) site. The active-site Proton donor/acceptor is Asp10. 4 residues coordinate alpha-D-mannose 1-phosphate: Arg17, Arg119, Arg130, and Arg137. Lys145 carries the N6-acetyllysine modification. Residues Ser175 and Asp177 each coordinate alpha-D-mannose 1-phosphate. Mg(2+) contacts are provided by Asp205, Phe217, Asp219, and Thr222.

It belongs to the eukaryotic PMM family. Homodimer.

The protein localises to the cytoplasm. It carries out the reaction alpha-D-mannose 1-phosphate = D-mannose 6-phosphate. The protein operates within nucleotide-sugar biosynthesis; GDP-alpha-D-mannose biosynthesis; alpha-D-mannose 1-phosphate from D-fructose 6-phosphate: step 2/2. Its function is as follows. Involved in the synthesis of the GDP-mannose and dolichol-phosphate-mannose required for a number of critical mannosyl transfer reactions. The chain is Phosphomannomutase 2 (Pmm2) from Mus musculus (Mouse).